Reading from the N-terminus, the 343-residue chain is L-lysine cyclodeaminase (343 aa).

Belongs to the ornithine cyclodeaminase/mu-crystallin family. Requires NAD(+) as cofactor.

The catalysed reaction is L-lysine = L-pipecolate + NH4(+). It functions in the pathway antibiotic biosynthesis. Its activity is regulated as follows. Inhibited by nipecotic acid and thiazolidine-2-carboxylic acid. Converts L-lysine to L-pipecolate, which is incorporated into multiple secondary metabolite products, including rapamycin, tobulysin, virginiamycin and pristinamycin. The polypeptide is L-lysine cyclodeaminase (rapL) (Streptomyces rapamycinicus (strain ATCC 29253 / DSM 41530 / NRRL 5491 / AYB-994) (Streptomyces hygroscopicus (strain ATCC 29253))).